Reading from the N-terminus, the 279-residue chain is Nitrogenase vanadium-iron protein alpha chain (279 aa).

[8Fe-7S] cluster is bound by residues cysteine 5, cysteine 31, and cysteine 94. Cysteine 213 contacts [7Fe-V-9S-C-homocitryl] cluster.

This sequence belongs to the NifD/NifK/NifE/NifN family. As to quaternary structure, hexamer of two alpha, two beta, and two delta chains. [8Fe-7S] cluster serves as cofactor. It depends on [7Fe-V-9S-C-homocitryl] cluster as a cofactor.

It carries out the reaction N2 + 8 reduced [2Fe-2S]-[ferredoxin] + 16 ATP + 16 H2O = H2 + 8 oxidized [2Fe-2S]-[ferredoxin] + 2 NH4(+) + 16 ADP + 16 phosphate + 6 H(+). Functionally, this vanadium-iron protein is part of the nitrogenase complex that catalyzes the key enzymatic reactions in nitrogen fixation. The protein is Nitrogenase vanadium-iron protein alpha chain (vnfD) of Azotobacter salinestris.